The sequence spans 430 residues: Serine--tRNA ligase (430 aa).

231 to 233 (TSE) contributes to the L-serine binding site. 262-264 (RSE) contacts ATP. E285 lines the L-serine pocket. 349–352 (EISS) contacts ATP. S385 is a binding site for L-serine.

Belongs to the class-II aminoacyl-tRNA synthetase family. Type-1 seryl-tRNA synthetase subfamily. In terms of assembly, homodimer. The tRNA molecule binds across the dimer.

The protein resides in the cytoplasm. It carries out the reaction tRNA(Ser) + L-serine + ATP = L-seryl-tRNA(Ser) + AMP + diphosphate + H(+). It catalyses the reaction tRNA(Sec) + L-serine + ATP = L-seryl-tRNA(Sec) + AMP + diphosphate + H(+). The protein operates within aminoacyl-tRNA biosynthesis; selenocysteinyl-tRNA(Sec) biosynthesis; L-seryl-tRNA(Sec) from L-serine and tRNA(Sec): step 1/1. Catalyzes the attachment of serine to tRNA(Ser). Is also able to aminoacylate tRNA(Sec) with serine, to form the misacylated tRNA L-seryl-tRNA(Sec), which will be further converted into selenocysteinyl-tRNA(Sec). The protein is Serine--tRNA ligase of Roseobacter denitrificans (strain ATCC 33942 / OCh 114) (Erythrobacter sp. (strain OCh 114)).